Reading from the N-terminus, the 185-residue chain is Ribosome maturation factor RimM (185 aa).

The region spanning 105-184 (KDEYYWKDII…IVVVDWEIYK (80 aa)) is the PRC barrel domain.

Belongs to the RimM family. In terms of assembly, binds ribosomal protein uS19.

It is found in the cytoplasm. In terms of biological role, an accessory protein needed during the final step in the assembly of 30S ribosomal subunit, possibly for assembly of the head region. Essential for efficient processing of 16S rRNA. May be needed both before and after RbfA during the maturation of 16S rRNA. It has affinity for free ribosomal 30S subunits but not for 70S ribosomes. In Blochmanniella floridana, this protein is Ribosome maturation factor RimM.